We begin with the raw amino-acid sequence, 125 residues long: Probable 4-amino-4-deoxy-L-arabinose-phosphoundecaprenol flippase subunit ArnF (125 aa).

The Cytoplasmic portion of the chain corresponds to 1–2 (MG). The helical transmembrane segment at 3–23 (VMWGLISVAIASLAQLSLGFA) threads the bilayer. Residues 24–33 (MMRLPSIAHP) lie on the Periplasmic side of the membrane. A helical membrane pass occupies residues 34-54 (LAFISGLGAFNAATLALFAGL). The Cytoplasmic segment spans residues 55 to 76 (AGYLVSVFCWQKTLHTLALSKA). Residues 77 to 97 (YALLSLSYVLVWVASMLLPGL) form a helical membrane-spanning segment. Residues 98 to 100 (QGA) are Periplasmic-facing. The helical transmembrane segment at 101–121 (FSLKAMLGVLCIMAGVMLIFL) threads the bilayer. Residues 122 to 125 (PARS) lie on the Cytoplasmic side of the membrane.

Belongs to the ArnF family. As to quaternary structure, heterodimer of ArnE and ArnF.

It is found in the cell inner membrane. Its pathway is bacterial outer membrane biogenesis; lipopolysaccharide biosynthesis. Functionally, translocates 4-amino-4-deoxy-L-arabinose-phosphoundecaprenol (alpha-L-Ara4N-phosphoundecaprenol) from the cytoplasmic to the periplasmic side of the inner membrane. The protein is Probable 4-amino-4-deoxy-L-arabinose-phosphoundecaprenol flippase subunit ArnF of Salmonella choleraesuis (strain SC-B67).